The primary structure comprises 195 residues: dCTP deaminase, dUMP-forming (195 aa).

DCTP-binding positions include 105 to 110 (RSSLGR), Asp123, 131 to 133 (TLE), Gln152, Tyr166, Lys173, and Gln177. Glu133 functions as the Proton donor/acceptor in the catalytic mechanism. The disordered stretch occupies residues 161-195 (PADRPYGDERGSKYQDQDGPQASRIRGDREFGGTQ). A compositionally biased stretch (basic and acidic residues) spans 165–176 (PYGDERGSKYQD). Basic and acidic residues predominate over residues 185–195 (IRGDREFGGTQ).

The protein belongs to the dCTP deaminase family. In terms of assembly, homotrimer.

The enzyme catalyses dCTP + 2 H2O = dUMP + NH4(+) + diphosphate. It functions in the pathway pyrimidine metabolism; dUMP biosynthesis; dUMP from dCTP: step 1/1. Bifunctional enzyme that catalyzes both the deamination of dCTP to dUTP and the hydrolysis of dUTP to dUMP without releasing the toxic dUTP intermediate. The sequence is that of dCTP deaminase, dUMP-forming from Halobacterium salinarum (strain ATCC 700922 / JCM 11081 / NRC-1) (Halobacterium halobium).